The primary structure comprises 361 residues: 1-deoxy-D-xylulose 5-phosphate reductoisomerase (361 aa).

Residues Thr12, Gly13, Ser14, Ile15, Gly38, and Asn102 each coordinate NADPH. Residue Lys103 participates in 1-deoxy-D-xylulose 5-phosphate binding. Glu104 is a binding site for NADPH. Residue Asp126 coordinates Mn(2+). 1-deoxy-D-xylulose 5-phosphate contacts are provided by Ser127, Glu128, Ser152, and His175. Residue Glu128 coordinates Mn(2+). Gly181 is an NADPH binding site. The 1-deoxy-D-xylulose 5-phosphate site is built by Ser188, Asn193, Lys194, and Glu197. Residue Glu197 coordinates Mn(2+).

This sequence belongs to the DXR family. Requires Mg(2+) as cofactor. Mn(2+) serves as cofactor.

It carries out the reaction 2-C-methyl-D-erythritol 4-phosphate + NADP(+) = 1-deoxy-D-xylulose 5-phosphate + NADPH + H(+). Its pathway is isoprenoid biosynthesis; isopentenyl diphosphate biosynthesis via DXP pathway; isopentenyl diphosphate from 1-deoxy-D-xylulose 5-phosphate: step 1/6. Functionally, catalyzes the NADPH-dependent rearrangement and reduction of 1-deoxy-D-xylulose-5-phosphate (DXP) to 2-C-methyl-D-erythritol 4-phosphate (MEP). This is 1-deoxy-D-xylulose 5-phosphate reductoisomerase from Leifsonia xyli subsp. xyli (strain CTCB07).